The following is a 325-amino-acid chain: Tetraacyldisaccharide 4'-kinase (325 aa).

58–65 serves as a coordination point for ATP; the sequence is TVGGSGKT.

The protein belongs to the LpxK family.

It catalyses the reaction a lipid A disaccharide + ATP = a lipid IVA + ADP + H(+). It functions in the pathway glycolipid biosynthesis; lipid IV(A) biosynthesis; lipid IV(A) from (3R)-3-hydroxytetradecanoyl-[acyl-carrier-protein] and UDP-N-acetyl-alpha-D-glucosamine: step 6/6. Its function is as follows. Transfers the gamma-phosphate of ATP to the 4'-position of a tetraacyldisaccharide 1-phosphate intermediate (termed DS-1-P) to form tetraacyldisaccharide 1,4'-bis-phosphate (lipid IVA). This chain is Tetraacyldisaccharide 4'-kinase, found in Coxiella burnetii (strain CbuK_Q154) (Coxiella burnetii (strain Q154)).